The chain runs to 339 residues: Tryptophan--tRNA ligase (339 aa).

Residues 11 to 13 and 19 to 20 each bind ATP; these read QPT and GN. The 'HIGH' region signature appears at 12–20; sequence PTGAIHIGN. Residue Asp135 participates in L-tryptophan binding. ATP contacts are provided by residues 147-149, Ile191, and 200-204; these read GED and KMSKS. The 'KMSKS' region signature appears at 200–204; sequence KMSKS.

Belongs to the class-I aminoacyl-tRNA synthetase family. Homodimer.

The protein localises to the cytoplasm. The enzyme catalyses tRNA(Trp) + L-tryptophan + ATP = L-tryptophyl-tRNA(Trp) + AMP + diphosphate + H(+). Its function is as follows. Catalyzes the attachment of tryptophan to tRNA(Trp). This chain is Tryptophan--tRNA ligase, found in Prochlorococcus marinus (strain SARG / CCMP1375 / SS120).